The primary structure comprises 393 residues: Small RNA 2'-O-methyltransferase (393 aa).

S-adenosyl-L-methionine-binding residues include Tyr36, Gly55, Asp78, Lys83, Val115, and Ile131. Mg(2+) contacts are provided by Glu132, Glu135, His136, and His181. Positions 286–307 are disordered; that stretch reads HLPRRKEQAGERGDKPKDIGGS. The span at 290 to 305 shows a compositional bias: basic and acidic residues; that stretch reads RKEQAGERGDKPKDIG.

The protein belongs to the methyltransferase superfamily. HEN1 family. It depends on Mg(2+) as a cofactor.

It localises to the cytoplasm. It carries out the reaction small RNA 3'-end nucleotide + S-adenosyl-L-methionine = small RNA 3'-end 2'-O-methylnucleotide + S-adenosyl-L-homocysteine + H(+). Its function is as follows. Methyltransferase that adds a 2'-O-methyl group at the 3'-end of piRNAs, a class of 24 to 30 nucleotide RNAs that are generated by a Dicer-independent mechanism and are primarily derived from transposons and other repeated sequence elements. This probably protects the 3'-end of piRNAs from uridylation activity and subsequent degradation. Stabilization of piRNAs is essential for gametogenesis. The polypeptide is Small RNA 2'-O-methyltransferase (HENMT1) (Homo sapiens (Human)).